The chain runs to 60 residues: Acrosin (60 aa).

Asparagine 3 carries an N-linked (GlcNAc...) asparagine glycan. Positions 24–60 (IIGGQDAAHGSWPWMVSLQIFTYHNNRRYHVCGGSLL) constitute a Peptidase S1 domain.

This sequence belongs to the peptidase S1 family. Heavy chain (catalytic) and a light chain linked by two disulfide bonds. Forms a heterodimer with SERPINA5.

The catalysed reaction is Preferential cleavage: Arg-|-Xaa, Lys-|-Xaa.. Inhibited by SERPINA5. Its function is as follows. Acrosin is the major protease of mammalian spermatozoa. It is a serine protease of trypsin-like cleavage specificity, it is synthesized in a zymogen form, proacrosin and stored in the acrosome. This is Acrosin (ACR) from Capra hircus (Goat).